Consider the following 1306-residue polypeptide: Kinesin-like protein KIN-14L (1306 aa).

In terms of domain architecture, Kinesin motor spans 142 to 456 (NVKVFCRSRP…LSFSARAKNA (315 aa)). Residue 223–230 (GQSRSGKT) coordinates ATP. 2 coiled-coil regions span residues 466–507 (IKKW…ANDQ) and 540–595 (HRIE…ALNS). Composition is skewed to polar residues over residues 592–611 (ALNS…SVIS) and 660–677 (LGSS…TNAQ). Disordered stretches follow at residues 592-627 (ALNS…SVTK), 657-710 (KSGL…SGAI), and 849-881 (KSHT…RTSL). Over residues 855-867 (SRSSSRGSSPGRS) the composition is skewed to low complexity.

The protein belongs to the TRAFAC class myosin-kinesin ATPase superfamily. Kinesin family. KIN-14 subfamily.

This Oryza sativa subsp. japonica (Rice) protein is Kinesin-like protein KIN-14L.